The chain runs to 247 residues: tRNA pseudouridine synthase A 1 (247 aa).

Residue aspartate 53 is the Nucleophile of the active site. Tyrosine 111 serves as a coordination point for substrate.

Belongs to the tRNA pseudouridine synthase TruA family. As to quaternary structure, homodimer.

The catalysed reaction is uridine(38/39/40) in tRNA = pseudouridine(38/39/40) in tRNA. Its function is as follows. Formation of pseudouridine at positions 38, 39 and 40 in the anticodon stem and loop of transfer RNAs. This is tRNA pseudouridine synthase A 1 from Bacillus cereus (strain ATCC 10987 / NRS 248).